A 1134-amino-acid polypeptide reads, in one-letter code: MMS19 nucleotide excision repair protein homolog (1134 aa).

HEAT repeat units lie at residues Gln959 to Val998, Leu1002 to Gln1047, Ser1050 to Arg1089, and Tyr1092 to Gly1130.

Belongs to the MET18/MMS19 family. Part of a complex composed of AE7, CIA1, MMS19 and NAR1. Interacts with AE7.

It is found in the nucleus. Its subcellular location is the cytoplasm. May select specific target apoproteins to which a Fe-S cluster produced by the cytosolic iron-sulfur (Fe-S) protein assembly (CIA) pathway is transferred. This Arabidopsis thaliana (Mouse-ear cress) protein is MMS19 nucleotide excision repair protein homolog.